We begin with the raw amino-acid sequence, 197 residues long: Imidazoleglycerol-phosphate dehydratase (197 aa).

It belongs to the imidazoleglycerol-phosphate dehydratase family.

The protein localises to the cytoplasm. The enzyme catalyses D-erythro-1-(imidazol-4-yl)glycerol 3-phosphate = 3-(imidazol-4-yl)-2-oxopropyl phosphate + H2O. It functions in the pathway amino-acid biosynthesis; L-histidine biosynthesis; L-histidine from 5-phospho-alpha-D-ribose 1-diphosphate: step 6/9. In Azorhizobium caulinodans (strain ATCC 43989 / DSM 5975 / JCM 20966 / LMG 6465 / NBRC 14845 / NCIMB 13405 / ORS 571), this protein is Imidazoleglycerol-phosphate dehydratase.